Reading from the N-terminus, the 252-residue chain is 5-oxoprolinase subunit A (252 aa).

This sequence belongs to the LamB/PxpA family. In terms of assembly, forms a complex composed of PxpA, PxpB and PxpC.

It catalyses the reaction 5-oxo-L-proline + ATP + 2 H2O = L-glutamate + ADP + phosphate + H(+). Its function is as follows. Catalyzes the cleavage of 5-oxoproline to form L-glutamate coupled to the hydrolysis of ATP to ADP and inorganic phosphate. This chain is 5-oxoprolinase subunit A, found in Corynebacterium glutamicum (strain ATCC 13032 / DSM 20300 / JCM 1318 / BCRC 11384 / CCUG 27702 / LMG 3730 / NBRC 12168 / NCIMB 10025 / NRRL B-2784 / 534).